Here is a 424-residue protein sequence, read N- to C-terminus: Histidine--tRNA ligase (424 aa).

Belongs to the class-II aminoacyl-tRNA synthetase family. Homodimer.

It localises to the cytoplasm. The enzyme catalyses tRNA(His) + L-histidine + ATP = L-histidyl-tRNA(His) + AMP + diphosphate + H(+). This Thioalkalivibrio sulfidiphilus (strain HL-EbGR7) protein is Histidine--tRNA ligase.